We begin with the raw amino-acid sequence, 349 residues long: 4-hydroxy-3-methylbut-2-enyl diphosphate reductase (349 aa).

Cys18 contributes to the [4Fe-4S] cluster binding site. Residues His47 and His83 each contribute to the (2E)-4-hydroxy-3-methylbut-2-enyl diphosphate site. The dimethylallyl diphosphate site is built by His47 and His83. Isopentenyl diphosphate contacts are provided by His47 and His83. Cys105 lines the [4Fe-4S] cluster pocket. His133 is a (2E)-4-hydroxy-3-methylbut-2-enyl diphosphate binding site. His133 is a dimethylallyl diphosphate binding site. His133 serves as a coordination point for isopentenyl diphosphate. Residue Glu135 is the Proton donor of the active site. Thr174 is a binding site for (2E)-4-hydroxy-3-methylbut-2-enyl diphosphate. [4Fe-4S] cluster is bound at residue Cys204. Ser232, Ser233, Asn234, and Ser277 together coordinate (2E)-4-hydroxy-3-methylbut-2-enyl diphosphate. Dimethylallyl diphosphate is bound by residues Ser232, Ser233, Asn234, and Ser277. Residues Ser232, Ser233, Asn234, and Ser277 each coordinate isopentenyl diphosphate.

The protein belongs to the IspH family. It depends on [4Fe-4S] cluster as a cofactor.

The enzyme catalyses isopentenyl diphosphate + 2 oxidized [2Fe-2S]-[ferredoxin] + H2O = (2E)-4-hydroxy-3-methylbut-2-enyl diphosphate + 2 reduced [2Fe-2S]-[ferredoxin] + 2 H(+). It catalyses the reaction dimethylallyl diphosphate + 2 oxidized [2Fe-2S]-[ferredoxin] + H2O = (2E)-4-hydroxy-3-methylbut-2-enyl diphosphate + 2 reduced [2Fe-2S]-[ferredoxin] + 2 H(+). The protein operates within isoprenoid biosynthesis; dimethylallyl diphosphate biosynthesis; dimethylallyl diphosphate from (2E)-4-hydroxy-3-methylbutenyl diphosphate: step 1/1. It participates in isoprenoid biosynthesis; isopentenyl diphosphate biosynthesis via DXP pathway; isopentenyl diphosphate from 1-deoxy-D-xylulose 5-phosphate: step 6/6. Catalyzes the conversion of 1-hydroxy-2-methyl-2-(E)-butenyl 4-diphosphate (HMBPP) into a mixture of isopentenyl diphosphate (IPP) and dimethylallyl diphosphate (DMAPP). Acts in the terminal step of the DOXP/MEP pathway for isoprenoid precursor biosynthesis. The protein is 4-hydroxy-3-methylbut-2-enyl diphosphate reductase of Bartonella bacilliformis (strain ATCC 35685 / KC583 / Herrer 020/F12,63).